The chain runs to 130 residues: Albumin-1 C (130 aa).

Residues 1 to 26 (MASVKLASLIVLFATLGMFLTKNVGA) form the signal peptide. 3 disulfide bridges follow: cysteine 29/cysteine 46, cysteine 33/cysteine 48, and cysteine 41/cysteine 58. 2 consecutive propeptides follow at residues 64-69 (VFLRTN) and 123-130 (LLKSVSTA).

Post-translationally, the C-terminal glycine may be removed from PA1b. In terms of tissue distribution, major component of both the cotyledons and embryonic axes of mature seeds.

Its function is as follows. PA1b binds to basic 7S globulin (BG) and stimulates its phosphorylation activity. Involved in the signal transduction system to regulate the growth and differentiation as a hormone peptide. Toxic to various insects through binding to a high affinity binding site in the insect gut. The polypeptide is Albumin-1 C (Pisum sativum (Garden pea)).